Here is a 395-residue protein sequence, read N- to C-terminus: Elongation factor Tu (395 aa).

Residues Lys10–Ala204 form the tr-type G domain. The tract at residues Gly19–Thr26 is G1. Gly19–Thr26 provides a ligand contact to GTP. Mg(2+) is bound at residue Thr26. The tract at residues Gly60–Asn64 is G2. A G3 region spans residues Asp81–Gly84. GTP is bound by residues Asp81 to His85 and Asn136 to Asp139. A G4 region spans residues Asn136–Asp139. The G5 stretch occupies residues Ser174 to Leu176.

This sequence belongs to the TRAFAC class translation factor GTPase superfamily. Classic translation factor GTPase family. EF-Tu/EF-1A subfamily. Monomer.

It is found in the cytoplasm. The catalysed reaction is GTP + H2O = GDP + phosphate + H(+). Its function is as follows. GTP hydrolase that promotes the GTP-dependent binding of aminoacyl-tRNA to the A-site of ribosomes during protein biosynthesis. This Leuconostoc mesenteroides subsp. mesenteroides (strain ATCC 8293 / DSM 20343 / BCRC 11652 / CCM 1803 / JCM 6124 / NCDO 523 / NBRC 100496 / NCIMB 8023 / NCTC 12954 / NRRL B-1118 / 37Y) protein is Elongation factor Tu.